Here is an 833-residue protein sequence, read N- to C-terminus: Glycerol-3-phosphate acyltransferase (833 aa).

Positions Cys309–Ile314 match the HXXXXD motif motif.

Belongs to the GPAT/DAPAT family.

It is found in the cell inner membrane. It catalyses the reaction sn-glycerol 3-phosphate + an acyl-CoA = a 1-acyl-sn-glycero-3-phosphate + CoA. Its pathway is phospholipid metabolism; CDP-diacylglycerol biosynthesis; CDP-diacylglycerol from sn-glycerol 3-phosphate: step 1/3. This chain is Glycerol-3-phosphate acyltransferase, found in Pseudomonas syringae pv. syringae (strain B728a).